Consider the following 135-residue polypeptide: ATP synthase epsilon chain (135 aa).

This sequence belongs to the ATPase epsilon chain family. In terms of assembly, F-type ATPases have 2 components, CF(1) - the catalytic core - and CF(0) - the membrane proton channel. CF(1) has five subunits: alpha(3), beta(3), gamma(1), delta(1), epsilon(1). CF(0) has three main subunits: a, b and c.

Its subcellular location is the cell inner membrane. Its function is as follows. Produces ATP from ADP in the presence of a proton gradient across the membrane. The chain is ATP synthase epsilon chain from Desulforapulum autotrophicum (strain ATCC 43914 / DSM 3382 / VKM B-1955 / HRM2) (Desulfobacterium autotrophicum).